Reading from the N-terminus, the 366-residue chain is NADH-quinone oxidoreductase subunit D (366 aa).

Belongs to the complex I 49 kDa subunit family. As to quaternary structure, NDH-1 is composed of 14 different subunits. Subunits NuoB, C, D, E, F, and G constitute the peripheral sector of the complex.

Its subcellular location is the cell membrane. The enzyme catalyses a quinone + NADH + 5 H(+)(in) = a quinol + NAD(+) + 4 H(+)(out). NDH-1 shuttles electrons from NADH, via FMN and iron-sulfur (Fe-S) centers, to quinones in the respiratory chain. The immediate electron acceptor for the enzyme in this species is believed to be a menaquinone. Couples the redox reaction to proton translocation (for every two electrons transferred, four hydrogen ions are translocated across the cytoplasmic membrane), and thus conserves the redox energy in a proton gradient. The protein is NADH-quinone oxidoreductase subunit D of Bacillus anthracis.